Here is a 600-residue protein sequence, read N- to C-terminus: Chaperonin 60 subunit beta 1, chloroplastic (600 aa).

The segment covering 1–12 (MASTFTATSSIG) has biased composition (polar residues). Residues 1–23 (MASTFTATSSIGSMVAPNGHKSD) form a disordered region. A chloroplast-targeting transit peptide spans 1–54 (MASTFTATSSIGSMVAPNGHKSDKKLISKLSSSSFGRRQSVCPRPRRSSSAIVC). Phosphoserine occurs at positions 101 and 478.

This sequence belongs to the chaperonin (HSP60) family. Part of the Cpn60 complex composed of 7 alpha and 7 beta subunits. Can also form a complex composed of 14 beta subunits only. Both complexes show ATPase activity. The Cpn60 complex interacts with the Cpn10 complex. Interacts with RAB during heat stress. Expressed in leaves, stems, petioles and flowers.

It is found in the plastid. It localises to the chloroplast stroma. Its function is as follows. Binds RuBisCO small and large subunits and is implicated in the assembly of the enzyme oligomer. Involved in protein assisted folding. Required for proper plastid division. This chain is Chaperonin 60 subunit beta 1, chloroplastic (CPN60B1), found in Arabidopsis thaliana (Mouse-ear cress).